Here is a 1081-residue protein sequence, read N- to C-terminus: Probable cellulose synthase A catalytic subunit 8 [UDP-forming] (1081 aa).

Residues 1-277 (MDGDADAVKS…PSSRINPYRM (277 aa)) lie on the Cytoplasmic side of the membrane. 8 residues coordinate Zn(2+): C19, C22, C38, C41, C46, C49, C61, and C64. The RING-type; degenerate zinc finger occupies 19–65 (CQICGDGVGTTAEGDVFAACDVCGFPVCRPCYEYERKDGTQACPQCK). The disordered stretch occupies residues 72 to 148 (KGSPAIRGEE…YDSGEIPRGY (77 aa)). Over residues 81–91 (EGEDTDADDVS) the composition is skewed to acidic residues. The span at 103–112 (QKQKIADRMR) shows a compositional bias: basic and acidic residues. The chain crosses the membrane as a helical span at residues 278–298 (VIVLRLVVLSIFLHYRITNPV). The Extracellular segment spans residues 299–300 (RN). A helical transmembrane segment spans residues 301–321 (AYPLWLLSVICEIWFALSWIL). The Cytoplasmic portion of the chain corresponds to 322–864 (DQFPKWFPIN…INTTIYPLTS (543 aa)). S360, K366, E367, and D396 together coordinate UDP-alpha-D-glucose. The active site involves D396. A coiled-coil region spans residues 450–477 (VKDRRAMKREYEEFKVRINGLVAKAQKV). K537 contributes to the UDP-alpha-D-glucose binding site. Residues K538 and D562 each coordinate Mn(2+). The tract at residues 660 to 684 (SLCGGRKKASKSKKKSSDKKKSNKH) is disordered. The span at 664–682 (GRKKASKSKKKSSDKKKSN) shows a compositional bias: basic residues. Residue D781 is part of the active site. Residues 865–885 (IPLLIYCVLPAICLLTGKFII) traverse the membrane as a helical segment. Residues 886-890 (PEISN) are Extracellular-facing. Residues 891–911 (FASIWFISLFISIFATGILEM) form a helical membrane-spanning segment. Over 912-926 (RWSGVGIDEWWRNEQ) the chain is Cytoplasmic. A helical transmembrane segment spans residues 927 to 947 (FWVIGGISAHLFAVFQGLLKV). The Extracellular segment spans residues 948–977 (LAGIDTNFTVTSKASDEDGDFAELYMFKWT). A glycan (N-linked (GlcNAc...) asparagine) is linked at N954. The chain crosses the membrane as a helical span at residues 978–998 (TLLIPPTTILIINLVGVVAGI). Topologically, residues 999-1009 (SYAINSGYQSW) are cytoplasmic. A helical membrane pass occupies residues 1010 to 1030 (GPLFGKLFFAFWVIVHLYPFL). Residues 1031–1039 (KGLMGRQNR) lie on the Extracellular side of the membrane. Residues 1040 to 1060 (TPTIVVVWAILLASIFSLLWV) form a helical membrane-spanning segment. Over 1061–1081 (RIDPFTTRVTGPDTQTCGINC) the chain is Cytoplasmic.

The protein belongs to the glycosyltransferase 2 family. Plant cellulose synthase subfamily. Requires Mn(2+) as cofactor. Zn(2+) serves as cofactor.

The protein localises to the cell membrane. It catalyses the reaction [(1-&gt;4)-beta-D-glucosyl](n) + UDP-alpha-D-glucose = [(1-&gt;4)-beta-D-glucosyl](n+1) + UDP + H(+). Its pathway is glycan metabolism; plant cellulose biosynthesis. Probable catalytic subunit of cellulose synthase terminal complexes ('rosettes'), required for beta-1,4-glucan microfibril crystallization, a major mechanism of the cell wall formation. In Oryza sativa subsp. japonica (Rice), this protein is Probable cellulose synthase A catalytic subunit 8 [UDP-forming] (CESA8).